The chain runs to 285 residues: Ribosomal protein L11 methyltransferase (285 aa).

Positions 131, 154, 176, and 223 each coordinate S-adenosyl-L-methionine.

The protein belongs to the methyltransferase superfamily. PrmA family.

It localises to the cytoplasm. The catalysed reaction is L-lysyl-[protein] + 3 S-adenosyl-L-methionine = N(6),N(6),N(6)-trimethyl-L-lysyl-[protein] + 3 S-adenosyl-L-homocysteine + 3 H(+). Functionally, methylates ribosomal protein L11. The protein is Ribosomal protein L11 methyltransferase of Brucella abortus (strain S19).